We begin with the raw amino-acid sequence, 686 residues long: MKPPFLLALVVCSVVSTNLKMVSKRNSVDGCIDWSVDLKTYMALAGEPVRVKCALFYSYIRTNYSTAQSTGLRLMWYKNKGDLEEPIIFSEVRMSKEEDSIWFHSAEAQDSGFYTCVLRNSTYCMKVSMSLTVAENESGLCYNSRIRYLEKSEVTKRKEISCPDMDDFKKSDQEPDVVWYKECKPKMWRSIIIQKGNALLIQEVQEEDGGNYTCELKYEGKLVRRTTELKVTALLTDKPPKPLFPMENQPSVIDVQLGKPLNIPCKAFFGFSGESGPMIYWMKGEKFIEELAGHIREGEIRLLKEHLGEKEVELALIFDSVVEADLANYTCHVENRNGRKHASVLLRKKDLIYKIELAGGLGAIFLLLVLLVVIYKCYNIELMLFYRQHFGADETNDDNKEYDAYLSYTKVDQDTLDCDNPEEEQFALEVLPDVLEKHYGYKLFIPERDLIPSGTYMEDLTRYVEQSRRLIIVLTPDYILRRGWSIFELESRLHNMLVSGEIKVILIECTELKGKVNCQEVESLKRSIKLLSLIKWKGSKSSKLNSKFWKHLVYEMPIKKKEMLPRCHVLDSAEQGLFGELQPIPSIAMTSTSATLVSSQADLPEFHPSDSMQIRHCCRGYKHEIPATTLPVPSLGNHHTYCNLPLTLLNGQLPLNNTLKDTQEFHRNSSLLPLSSKELSFTSDIW.

Positions 1 to 16 (MKPPFLLALVVCSVVS) are cleaved as a signal peptide. The Extracellular segment spans residues 17-354 (TNLKMVSKRN…LLRKKDLIYK (338 aa)). The Ig-like C2-type 1 domain maps to 18–132 (NLKMVSKRNS…YCMKVSMSLT (115 aa)). Residues Cys53 and Cys116 are joined by a disulfide bond. Asn63, Asn120, Asn136, Asn211, and Asn328 each carry an N-linked (GlcNAc...) asparagine glycan. Ig-like C2-type domains lie at 141-232 (CYNS…LKVT) and 239-347 (PPKP…VLLR). Intrachain disulfides connect Cys162/Cys214 and Cys265/Cys331. The chain crosses the membrane as a helical span at residues 355–375 (IELAGGLGAIFLLLVLLVVIY). At 376-686 (KCYNIELMLF…KELSFTSDIW (311 aa)) the chain is on the cytoplasmic side. Residues 400–556 (KEYDAYLSYT…KFWKHLVYEM (157 aa)) enclose the TIR domain. Residue Glu488 is part of the active site.

Belongs to the interleukin-1 receptor family. Detected at low levels in fetal and adult brain, in particular in the frontal lobe, temporal lobe and cerebellum. Detected at very low levels in skin, liver, fetal ovary and in placenta.

Its subcellular location is the membrane. It catalyses the reaction NAD(+) + H2O = ADP-D-ribose + nicotinamide + H(+). This chain is X-linked interleukin-1 receptor accessory protein-like 2 (IL1RAPL2), found in Homo sapiens (Human).